A 48-amino-acid polypeptide reads, in one-letter code: Small polypeptide DEVIL 19 (48 aa).

A required for DVL/RTFL small polypeptide activity region spans residues 13 to 44 (AFTSKCVSLVKEQRARLYILRRCATMLCCWYI). The helical transmembrane segment at 25–42 (QRARLYILRRCATMLCCW) threads the bilayer.

Belongs to the DVL/RTFL small polypeptides family.

Its subcellular location is the cell membrane. In terms of biological role, small polypeptide acting as a regulatory molecule which coordinates cellular responses required for differentiation, growth and development, probably by restricting polar cell proliferation in lateral organs and coordinating socket cell recruitment and differentiation at trichome sites. This chain is Small polypeptide DEVIL 19, found in Arabidopsis thaliana (Mouse-ear cress).